Consider the following 1029-residue polypeptide: Putative guanine nucleotide-exchange factor SED4 (1029 aa).

At 1-344 (MVFDSEYDLG…AMGGSNLWKS (344 aa)) the chain is on the cytoplasmic side. WD repeat units follow at residues 257-296 (KDYK…VIKL) and 300-339 (VHKD…MGGS). The chain crosses the membrane as a helical; Signal-anchor for type II membrane protein span at residues 345-365 (LLRFLFNVMKLAVVVIWAHLF). The Lumenal portion of the chain corresponds to 366–1029 (YKYDLHHKLY…TQHNVINDEL (664 aa)). Residue asparagine 579 is glycosylated (N-linked (GlcNAc...) asparagine). The segment covering 579–592 (NASTSISIEESTNS) has biased composition (low complexity). Disordered regions lie at residues 579 to 673 (NAST…NSIV), 710 to 732 (VVDE…VGSI), and 747 to 821 (EAVK…SQIS). The segment covering 593–603 (HSTFIESSSSL) has biased composition (polar residues). Asparagine 608 is a glycosylation site (N-linked (GlcNAc...) asparagine). The segment covering 613 to 628 (SSREISSETSIIKEDM) has biased composition (basic and acidic residues). Polar residues predominate over residues 633 to 642 (ENVSEQSATD). Asparagine 634 and asparagine 647 each carry an N-linked (GlcNAc...) asparagine glycan. Residues 643–654 (KVNKNQSIDKID) show a composition bias toward basic and acidic residues. Residues 655 to 672 (VSSSSSIPTSSEGSSNSI) show a composition bias toward low complexity. The span at 712–722 (DENHSESKLPT) shows a compositional bias: basic and acidic residues. Residues asparagine 714, asparagine 754, asparagine 774, asparagine 792, asparagine 806, asparagine 855, asparagine 865, asparagine 874, asparagine 884, and asparagine 966 are each glycosylated (N-linked (GlcNAc...) asparagine). Composition is skewed to polar residues over residues 750-762 (KTSS…SQVT) and 771-782 (RVSNQSLSTVST). Basic and acidic residues predominate over residues 783–799 (EHTEMKESSNLTEKKPE). Residues 800–812 (SNSPESNLSESSL) are compositionally biased toward low complexity. Residues 858-867 (LVDSQSSNSS) are compositionally biased toward low complexity. Disordered regions lie at residues 858–886 (LVDS…QNET), 963–982 (TPEN…FMTE), and 1003–1029 (VAQQ…NDEL). The segment covering 868–886 (VKTVETNVSQDEQTSQNET) has biased composition (polar residues). The short motif at 1026–1029 (NDEL) is the Prevents secretion from ER element.

Belongs to the WD repeat SEC12 family.

Its subcellular location is the endoplasmic reticulum membrane. It is found in the golgi apparatus membrane. Putative guanine nucleotide-exchange factor (GEF) involved in the formation or budding of transport vesicles from the ER. Positive regulator of SAR1 probably through inhibition of the GTPase activation by SEC23. This Candida glabrata (strain ATCC 2001 / BCRC 20586 / JCM 3761 / NBRC 0622 / NRRL Y-65 / CBS 138) (Yeast) protein is Putative guanine nucleotide-exchange factor SED4 (SED4).